The following is a 410-amino-acid chain: Histidine--tRNA ligase (410 aa).

This sequence belongs to the class-II aminoacyl-tRNA synthetase family.

The protein localises to the cytoplasm. It catalyses the reaction tRNA(His) + L-histidine + ATP = L-histidyl-tRNA(His) + AMP + diphosphate + H(+). This is Histidine--tRNA ligase from Methanoculleus marisnigri (strain ATCC 35101 / DSM 1498 / JR1).